Consider the following 259-residue polypeptide: tRNA pseudouridine synthase A (259 aa).

Aspartate 52 functions as the Nucleophile in the catalytic mechanism. Residue tyrosine 111 participates in substrate binding.

The protein belongs to the tRNA pseudouridine synthase TruA family. Homodimer.

The enzyme catalyses uridine(38/39/40) in tRNA = pseudouridine(38/39/40) in tRNA. Formation of pseudouridine at positions 38, 39 and 40 in the anticodon stem and loop of transfer RNAs. The polypeptide is tRNA pseudouridine synthase A (Ruegeria sp. (strain TM1040) (Silicibacter sp.)).